Here is a 340-residue protein sequence, read N- to C-terminus: Biotin synthase (340 aa).

Residues 1–21 (MDAASVSFGSGHDLSSQPRHD) form a disordered region. The region spanning 53–272 (NHVETANLLS…IAVARIMMPR (220 aa)) is the Radical SAM core domain. [4Fe-4S] cluster is bound by residues Cys-68, Cys-72, and Cys-75. The [2Fe-2S] cluster site is built by Cys-112, Cys-143, Cys-203, and Arg-276.

The protein belongs to the radical SAM superfamily. Biotin synthase family. In terms of assembly, homodimer. [4Fe-4S] cluster serves as cofactor. [2Fe-2S] cluster is required as a cofactor.

It catalyses the reaction (4R,5S)-dethiobiotin + (sulfur carrier)-SH + 2 reduced [2Fe-2S]-[ferredoxin] + 2 S-adenosyl-L-methionine = (sulfur carrier)-H + biotin + 2 5'-deoxyadenosine + 2 L-methionine + 2 oxidized [2Fe-2S]-[ferredoxin]. The protein operates within cofactor biosynthesis; biotin biosynthesis; biotin from 7,8-diaminononanoate: step 2/2. In terms of biological role, catalyzes the conversion of dethiobiotin (DTB) to biotin by the insertion of a sulfur atom into dethiobiotin via a radical-based mechanism. The polypeptide is Biotin synthase (Nitrobacter hamburgensis (strain DSM 10229 / NCIMB 13809 / X14)).